The primary structure comprises 235 residues: Myelin protein zero-like protein 3 (235 aa).

The signal sequence occupies residues 1–31 (MQQRGAAGSRGCALFPLLGVLFFQGVYIVFS). Residues 32 to 148 (LEIRADAHVR…NIPMTELTVT (117 aa)) enclose the Ig-like V-type domain. The Extracellular segment spans residues 32-158 (LEIRADAHVR…ERGFGTMLSS (127 aa)). Cysteine 52 and cysteine 128 are joined by a disulfide. N-linked (GlcNAc...) asparagine glycosylation occurs at asparagine 123. A helical transmembrane segment spans residues 159 to 179 (VALLSILVFVPSAVVVALLLV). The Cytoplasmic segment spans residues 180–235 (RMGRKAAGLKKRSRSGYKKSSIEVSDDTDQEEEEACMARLCVRCAECLDSDYEETY).

The protein belongs to the myelin P0 protein family.

The protein resides in the membrane. In terms of biological role, mediates homophilic cell-cell adhesion. In Homo sapiens (Human), this protein is Myelin protein zero-like protein 3 (MPZL3).